A 183-amino-acid chain; its full sequence is Acireductone dioxygenase (183 aa).

Residues His95, His97, Glu101, and His139 each coordinate Fe(2+). Positions 95, 97, 101, and 139 each coordinate Ni(2+).

The protein belongs to the acireductone dioxygenase (ARD) family. As to quaternary structure, monomer. Fe(2+) serves as cofactor. Requires Ni(2+) as cofactor.

It carries out the reaction 1,2-dihydroxy-5-(methylsulfanyl)pent-1-en-3-one + O2 = 3-(methylsulfanyl)propanoate + CO + formate + 2 H(+). It catalyses the reaction 1,2-dihydroxy-5-(methylsulfanyl)pent-1-en-3-one + O2 = 4-methylsulfanyl-2-oxobutanoate + formate + 2 H(+). Its pathway is amino-acid biosynthesis; L-methionine biosynthesis via salvage pathway; L-methionine from S-methyl-5-thio-alpha-D-ribose 1-phosphate: step 5/6. In terms of biological role, catalyzes 2 different reactions between oxygen and the acireductone 1,2-dihydroxy-3-keto-5-methylthiopentene (DHK-MTPene) depending upon the metal bound in the active site. Fe-containing acireductone dioxygenase (Fe-ARD) produces formate and 2-keto-4-methylthiobutyrate (KMTB), the alpha-ketoacid precursor of methionine in the methionine recycle pathway. Ni-containing acireductone dioxygenase (Ni-ARD) produces methylthiopropionate, carbon monoxide and formate, and does not lie on the methionine recycle pathway. This Aquifex aeolicus (strain VF5) protein is Acireductone dioxygenase.